The chain runs to 923 residues: MLGFAKKLFGSSNERKVKTLATRVAKINAYEAEYAALSDEALKGKTAEFKARLEKGETLDDILNEAFAVVREASKRVLGMRHFDVQMVGGMVLHFSGISEMRTGEGKTLVATLPTYLNALEGKGVHVITVNDYLARRDADWMGQVYNFLGLSYGVIVNGLSQGERQRAYRSDITYGTNNEFGFDYLRDNLVYSVDEMVQRGHNFAIVDEVDSILIDEARTPLIISGPTEDRSSFYKTIDVLVKELILDKSMFDHDEKQKQVILTEDGQEKIEEILMSGGHLAEDSAGLYDAANVSVVHHVNQALRANILYTRDKDYIVKGGEVVLIDEFTGRMMTGRRLSEGLHQAIEAKEGADIQPENQTLASVTIQNYFRLYKKLSGMTGTASTEAQEFDDIYKMSVSEIPTNRTIQRIDDDDEVYRTEREKNEAILKQIADCHVRGQPILVGTVSIEKSEELSKLLSTFSFEKDGKKVKGIPHQVLNARFHEQEAVIVADAGVPGAVTIATNMAGRGTDIQLGGSIDMRLFNWRQQQRGMGLEITVEDEAEERARLETEIADKKAQALAAGGLFVLGTERHESRRIDNQLRGRTGRQGDPGRSKFFLSCEDDLLRIFAGERLDAIMRTFGVQEGEAITHKWLNNAIATAQKRVEQRNYEIRKNLLKYDDVVNDQRKAVFEQRQEFMESSDLSDIIHEMRRDVIDDLVLRHLPPKAYAEQWDVEGLTERVKSILGLDLPIAEWAAEEGIADEEMKERITKAADEYAAQREVIITPEQMRSVEKSFLLQMIDLQWREHLMHLDHLRNVIGLRGYGQRDPLNEYKTEAFSLFEKLLGDLRTNTTRWLMTVEIAYAEPEVPHTPLDNLVEVHLDPLTGENAAFAGGIPEGLSTAQREALPVSALPEGWDRTNRNAPCPCGSGKKFKQCHGSLVR.

Residues glutamine 86, glycine 104–threonine 108, and aspartate 512 contribute to the ATP site. Cysteine 906, cysteine 908, cysteine 917, and histidine 918 together coordinate Zn(2+).

It belongs to the SecA family. As to quaternary structure, monomer and homodimer. Part of the essential Sec protein translocation apparatus which comprises SecA, SecYEG and auxiliary proteins SecDF-YajC and YidC. Requires Zn(2+) as cofactor.

It is found in the cell inner membrane. The protein localises to the cytoplasm. It carries out the reaction ATP + H2O + cellular proteinSide 1 = ADP + phosphate + cellular proteinSide 2.. Functionally, part of the Sec protein translocase complex. Interacts with the SecYEG preprotein conducting channel. Has a central role in coupling the hydrolysis of ATP to the transfer of proteins into and across the cell membrane, serving both as a receptor for the preprotein-SecB complex and as an ATP-driven molecular motor driving the stepwise translocation of polypeptide chains across the membrane. This Caulobacter vibrioides (strain ATCC 19089 / CIP 103742 / CB 15) (Caulobacter crescentus) protein is Protein translocase subunit SecA.